We begin with the raw amino-acid sequence, 280 residues long: 4-diphosphocytidyl-2-C-methyl-D-erythritol kinase (280 aa).

Lysine 8 is a catalytic residue. Position 91-101 (91-101) interacts with ATP; that stretch reads PVSAGLAGGST. Residue aspartate 133 is part of the active site.

Belongs to the GHMP kinase family. IspE subfamily.

The catalysed reaction is 4-CDP-2-C-methyl-D-erythritol + ATP = 4-CDP-2-C-methyl-D-erythritol 2-phosphate + ADP + H(+). It functions in the pathway isoprenoid biosynthesis; isopentenyl diphosphate biosynthesis via DXP pathway; isopentenyl diphosphate from 1-deoxy-D-xylulose 5-phosphate: step 3/6. Its function is as follows. Catalyzes the phosphorylation of the position 2 hydroxy group of 4-diphosphocytidyl-2C-methyl-D-erythritol. The sequence is that of 4-diphosphocytidyl-2-C-methyl-D-erythritol kinase from Clostridium beijerinckii (strain ATCC 51743 / NCIMB 8052) (Clostridium acetobutylicum).